Consider the following 152-residue polypeptide: Ribosome maturation factor RimP (152 aa).

Belongs to the RimP family.

Its subcellular location is the cytoplasm. Functionally, required for maturation of 30S ribosomal subunits. This chain is Ribosome maturation factor RimP, found in Idiomarina loihiensis (strain ATCC BAA-735 / DSM 15497 / L2-TR).